The sequence spans 144 residues: uncharacterized protein (144 aa).

Residues 98–127 (PLADGATVDSQASENGEKEAQPTPPKEGLL) form a disordered region.

This is an uncharacterized protein from Aedes vexans (Inland floodwater mosquito).